We begin with the raw amino-acid sequence, 409 residues long: Tryptophan synthase beta chain (409 aa).

Position 98 is an N6-(pyridoxal phosphate)lysine (K98).

This sequence belongs to the TrpB family. As to quaternary structure, tetramer of two alpha and two beta chains. Pyridoxal 5'-phosphate serves as cofactor.

The catalysed reaction is (1S,2R)-1-C-(indol-3-yl)glycerol 3-phosphate + L-serine = D-glyceraldehyde 3-phosphate + L-tryptophan + H2O. Its pathway is amino-acid biosynthesis; L-tryptophan biosynthesis; L-tryptophan from chorismate: step 5/5. In terms of biological role, the beta subunit is responsible for the synthesis of L-tryptophan from indole and L-serine. This is Tryptophan synthase beta chain (trpB) from Cereibacter sphaeroides (strain ATCC 17023 / DSM 158 / JCM 6121 / CCUG 31486 / LMG 2827 / NBRC 12203 / NCIMB 8253 / ATH 2.4.1.) (Rhodobacter sphaeroides).